The sequence spans 188 residues: Protease-associated domain-containing protein 1 (188 aa).

The N-terminal stretch at 1 to 21 (MSRGAAGWCCLVLWLPTCVAA) is a signal peptide. The PA domain maps to 83–163 (IQDQIALVER…RSLEQHGLPW (81 aa)). N121 and N171 each carry an N-linked (GlcNAc...) asparagine glycan.

In terms of processing, N-glycosylated; required for efficient secretion. As to expression, expressed in metabolically active tissues such as liver, muscle, adipose, and heart and different brain regions like cortex and hypothalamus, expression is acutely regulated by the nutritional state.

It is found in the secreted. Plays a role in the modulation of physical activity and adiposity. The protein is Protease-associated domain-containing protein 1 of Mus musculus (Mouse).